We begin with the raw amino-acid sequence, 163 residues long: Small ribosomal subunit protein uS9 (163 aa).

The segment at 1–41 is disordered; the sequence is MAENTNDSAVLETEEELTSYTTETNAGAGTGTSTIAPGYGT. Residues 18–38 show a composition bias toward low complexity; it reads TSYTTETNAGAGTGTSTIAPG.

The protein belongs to the universal ribosomal protein uS9 family.

This is Small ribosomal subunit protein uS9 from Bifidobacterium adolescentis (strain ATCC 15703 / DSM 20083 / NCTC 11814 / E194a).